The following is a 567-amino-acid chain: DNA ligase B (567 aa).

Residue lysine 132 is the N6-AMP-lysine intermediate of the active site.

The protein belongs to the NAD-dependent DNA ligase family. LigB subfamily.

It catalyses the reaction NAD(+) + (deoxyribonucleotide)n-3'-hydroxyl + 5'-phospho-(deoxyribonucleotide)m = (deoxyribonucleotide)n+m + AMP + beta-nicotinamide D-nucleotide.. Catalyzes the formation of phosphodiester linkages between 5'-phosphoryl and 3'-hydroxyl groups in double-stranded DNA using NAD as a coenzyme and as the energy source for the reaction. The sequence is that of DNA ligase B from Yersinia pseudotuberculosis serotype IB (strain PB1/+).